A 195-amino-acid chain; its full sequence is GTP cyclohydrolase 1 (195 aa).

3 residues coordinate Zn(2+): Cys-85, His-88, and Cys-157.

This sequence belongs to the GTP cyclohydrolase I family. As to quaternary structure, toroid-shaped homodecamer, composed of two pentamers of five dimers.

It carries out the reaction GTP + H2O = 7,8-dihydroneopterin 3'-triphosphate + formate + H(+). Its pathway is cofactor biosynthesis; 7,8-dihydroneopterin triphosphate biosynthesis; 7,8-dihydroneopterin triphosphate from GTP: step 1/1. The chain is GTP cyclohydrolase 1 from Clostridium acetobutylicum (strain ATCC 824 / DSM 792 / JCM 1419 / IAM 19013 / LMG 5710 / NBRC 13948 / NRRL B-527 / VKM B-1787 / 2291 / W).